The chain runs to 320 residues: Putative olfactory receptor 2W5 pseudogene (320 aa).

N-linked (GlcNAc...) asparagine glycosylation occurs at Asn-5. The next 4 helical transmembrane spans lie at 30–50, 58–78, 98–118, and 140–160; these read VILI…LLLV, PMYF…ASIA, VAQL…LVVM, and LCLQ…FIMC. Cys-97 and Cys-179 are joined by a disulfide. Residues 267-320 form a disordered region; sequence LPRSGEVPDSLLHHRHSQHQPPHLHFEEQGCEGDHEETSGVGERGWGASTRGTL. Residues 290 to 304 are compositionally biased toward basic and acidic residues; sequence LHFEEQGCEGDHEET.

This sequence belongs to the G-protein coupled receptor 1 family.

It is found in the cell membrane. Its function is as follows. Odorant receptor. The polypeptide is Putative olfactory receptor 2W5 pseudogene (Homo sapiens (Human)).